We begin with the raw amino-acid sequence, 230 residues long: Cytidylate kinase (230 aa).

Residue 10-18 (GPAGSGKST) participates in ATP binding.

It belongs to the cytidylate kinase family. Type 1 subfamily.

It is found in the cytoplasm. It catalyses the reaction CMP + ATP = CDP + ADP. The enzyme catalyses dCMP + ATP = dCDP + ADP. The protein is Cytidylate kinase of Leptospira borgpetersenii serovar Hardjo-bovis (strain L550).